Reading from the N-terminus, the 382-residue chain is MNQDMELPEAYTSASNDFRSDTFTTPTREMIEAALTATIGDAVYQEDIDTLKLEQHVAKLAGMEAGMFCVSGTLSNQIALRTHLTQPPYSILCDYRAHVYTHEAAGLAILSQAMVTPVIPSNGNYLTLEDIKKHYIPDDGDIHGAPTKVISLENTLHGIIHPLEELVRIKAWCMENDLRLHCDGARIWNASAESGVPLKQYGELFDSISICLSKSMGAPMGSILVGSHKFIKKANHFRKQQGGGVRQSGMMCKMAMVAIQGDWKGKMRRSHRMAHELARFCAEHGIPLESPADTNFVFLDLQKSKMNPDVLVKKSLKYGCKLMGGRVSFHYQISEESLEKIKQAILEAFEYSKKNPYDENGPTKIYRSESADAVGEIKTYKY.

K214 is modified (N6-(pyridoxal phosphate)lysine).

This sequence belongs to the threonine aldolase family. Homotetramer. It depends on pyridoxal 5'-phosphate as a cofactor.

It carries out the reaction L-threonine = acetaldehyde + glycine. It catalyses the reaction L-allo-threonine = acetaldehyde + glycine. Its pathway is amino-acid degradation; L-threonine degradation via aldolase pathway; acetaldehyde and glycine from L-threonine: step 1/1. In Eremothecium gossypii (strain ATCC 10895 / CBS 109.51 / FGSC 9923 / NRRL Y-1056) (Yeast), this protein is Low-specificity L-threonine aldolase (GLY1).